The chain runs to 547 residues: Ganoderic acid synthetase CYP5150L8 (547 aa).

The chain crosses the membrane as a helical span at residues 2–22 (PDSSLVLVAIAGAAYIFWLVF). Cys487 is a heme binding site.

It belongs to the cytochrome P450 family. Requires heme as cofactor.

Its subcellular location is the membrane. It catalyses the reaction lanosterol + reduced [NADPH--hemoprotein reductase] + O2 = 26-hydroxylanosterol + oxidized [NADPH--hemoprotein reductase] + H2O + H(+). The catalysed reaction is 26-hydroxylanosterol + reduced [NADPH--hemoprotein reductase] + O2 = 26-oxolanosterol + oxidized [NADPH--hemoprotein reductase] + 2 H2O + H(+). The enzyme catalyses 26-oxolanosterol + reduced [NADPH--hemoprotein reductase] + O2 = 3beta-hydroxy-lanosta-8, 24-dien-26-oate + oxidized [NADPH--hemoprotein reductase] + H2O + 2 H(+). It functions in the pathway secondary metabolite biosynthesis; terpenoid biosynthesis. Functionally, cytochrome P450 monooxygenase that is involved in the biosynthesis of ganoderic acids (GA), a group of highly oxygenated lanostane-type triterpenoids which well recognized as a main group of unique bioactive compounds in the medicinal mushroom Ganoderma lucidum. CYP5150L8 alone is able to catalyze the three-step oxidations at C-26 from lanosterol to 3-hydroxy-lanosta-8,24-dien-26-oic acid (also called ganoderic acid Z or HLDOA). The methyl group of lanosterol at C-26 is first oxidized into hydroxyl group to form 3-hydroxy-lanosta-8,24-dien-26-ol (HLDO). The hydroxyl group at C-26 of HLDO is further converted into a formyl group to form 3-hydroxy-lanosta-8,24-dien-26-al (HLDA). Finally, the formyl group is oxidized into a carboxyl group to produce 3-hydroxy-lanosta-8,24-dien-26-oic acid (HLDOA). This is Ganoderic acid synthetase CYP5150L8 from Ganoderma lucidum (Ling zhi medicinal fungus).